Reading from the N-terminus, the 154-residue chain is Myoglobin (154 aa).

One can recognise a Globin domain in the interval 2 to 148 (GLSDGEWQLV…FRHDMAAKYK (147 aa)). S4 bears the Phosphoserine mark. H65 lines the nitrite pocket. H65 is an O2 binding site. T68 is subject to Phosphothreonine. H94 contacts heme b.

This sequence belongs to the globin family. As to quaternary structure, monomeric.

It localises to the cytoplasm. It is found in the sarcoplasm. The catalysed reaction is Fe(III)-heme b-[protein] + nitric oxide + H2O = Fe(II)-heme b-[protein] + nitrite + 2 H(+). The enzyme catalyses H2O2 + AH2 = A + 2 H2O. In terms of biological role, monomeric heme protein which primary function is to store oxygen and facilitate its diffusion within muscle tissues. Reversibly binds oxygen through a pentacoordinated heme iron and enables its timely and efficient release as needed during periods of heightened demand. Depending on the oxidative conditions of tissues and cells, and in addition to its ability to bind oxygen, it also has a nitrite reductase activity whereby it regulates the production of bioactive nitric oxide. Under stress conditions, like hypoxia and anoxia, it also protects cells against reactive oxygen species thanks to its pseudoperoxidase activity. This is Myoglobin (MB) from Osphranter rufus (Red kangaroo).